Reading from the N-terminus, the 247-residue chain is 6-carboxyhexanoate--CoA ligase (247 aa).

The protein belongs to the BioW family. As to quaternary structure, homodimer. The cofactor is Mg(2+).

It catalyses the reaction heptanedioate + ATP + CoA = 6-carboxyhexanoyl-CoA + AMP + diphosphate. The protein operates within metabolic intermediate metabolism; pimeloyl-CoA biosynthesis; pimeloyl-CoA from pimelate: step 1/1. Its function is as follows. Catalyzes the transformation of pimelate into pimeloyl-CoA with concomitant hydrolysis of ATP to AMP. The chain is 6-carboxyhexanoate--CoA ligase from Corynebacterium diphtheriae (strain ATCC 700971 / NCTC 13129 / Biotype gravis).